A 228-amino-acid chain; its full sequence is Prolactin (228 aa).

The signal sequence occupies residues 1 to 29 (MGTKRSSLKGSLLLLLLMSSLFLFKSVES). Cys-33 and Cys-40 form a disulfide bridge. A phosphoserine mark is found at Ser-55, Ser-63, and Ser-119. Intrachain disulfides connect Cys-87–Cys-203 and Cys-220–Cys-228.

It belongs to the somatotropin/prolactin family. Interacts with PRLR.

The protein resides in the secreted. Functionally, prolactin acts primarily on the mammary gland by promoting lactation, mammogenesis, mitogenesis and osmoregulation. The polypeptide is Prolactin (PRL) (Trichosurus vulpecula (Brush-tailed possum)).